Consider the following 101-residue polypeptide: MKTKLRVGDKVKILCGKDRGKVGEIASIDRKKFKVTVKSCNMIKKVIKARTPQEKGKIIDKEAPMDISNVMLFSNGVISRVGIKFENNEKKRYLKKSGENV.

The protein belongs to the universal ribosomal protein uL24 family. As to quaternary structure, part of the 50S ribosomal subunit.

One of two assembly initiator proteins, it binds directly to the 5'-end of the 23S rRNA, where it nucleates assembly of the 50S subunit. In terms of biological role, one of the proteins that surrounds the polypeptide exit tunnel on the outside of the subunit. The chain is Large ribosomal subunit protein uL24 from Borrelia recurrentis (strain A1).